A 306-amino-acid chain; its full sequence is Beta-lactamase 1 (306 aa).

The N-terminal stretch at Met-1–Ala-27 is a signal peptide. Catalysis depends on Ser-91, which acts as the Acyl-ester intermediate. Residue Glu-187 is the Proton acceptor of the active site. Lys-253 to Gly-255 contributes to the substrate binding site.

The protein belongs to the class-A beta-lactamase family.

The enzyme catalyses a beta-lactam + H2O = a substituted beta-amino acid. In terms of biological role, this protein is a beta-lactamase with a substrate specificity for penicillins. This chain is Beta-lactamase 1 (blaY), found in Bacillus cereus.